Reading from the N-terminus, the 282-residue chain is Armadillo repeat-containing protein 1 (282 aa).

Methionine 1 carries the post-translational modification N-acetylmethionine. An ARM repeat occupies 39 to 81; it reads GCLPGLILFMDHPNPPVVHSALLALRYLAECRANREKMKGELG. Threonine 137 bears the Phosphothreonine mark. Residues serine 189, serine 246, serine 260, and serine 267 each carry the phosphoserine modification. Positions 239–261 are disordered; sequence DYLPEDESPTKEQDKAVSRVGSH. The span at 246 to 255 shows a compositional bias: basic and acidic residues; that stretch reads SPTKEQDKAV.

In terms of assembly, interacts with mitochondrial contact site and cristae organizing system (MICOS) complex components IMMT/MIC60 and MICOS10/MIC10. Interacts with mitochondrial outer membrane sorting assembly machinery (SAM) complex components SAMM50 and MTX1.

The protein localises to the cytoplasm. It localises to the mitochondrion. It is found in the mitochondrion outer membrane. In association with mitochondrial contact site and cristae organizing system (MICOS) complex components and mitochondrial outer membrane sorting assembly machinery (SAM) complex components may regulate mitochondrial dynamics playing a role in determining mitochondrial length, distribution and motility. The sequence is that of Armadillo repeat-containing protein 1 (Armc1) from Mus musculus (Mouse).